A 478-amino-acid chain; its full sequence is Cysteine--tRNA ligase (478 aa).

Zn(2+) is bound at residue Cys37. A 'HIGH' region motif is present at residues 39 to 49; the sequence is PTVYHYAHIGN. Cys224, His249, and Glu253 together coordinate Zn(2+). The 'KMSKS' region motif lies at 281 to 285; the sequence is KMSKS. Lys284 serves as a coordination point for ATP.

It belongs to the class-I aminoacyl-tRNA synthetase family. In terms of assembly, monomer. It depends on Zn(2+) as a cofactor.

Its subcellular location is the cytoplasm. The enzyme catalyses tRNA(Cys) + L-cysteine + ATP = L-cysteinyl-tRNA(Cys) + AMP + diphosphate. In Protochlamydia amoebophila (strain UWE25), this protein is Cysteine--tRNA ligase.